The primary structure comprises 831 residues: Histone acetyltransferase SAS3 (831 aa).

One can recognise an MYST-type HAT domain in the interval 267 to 573; it reads VWFSQIEYIV…VKYDKLLWEP (307 aa). The segment at 300–325 adopts a C2HC MYST-type zinc-finger fold; that stretch reads VFICEFCLKYMTSRYTFYRHQLKCLT. Lys367 carries the post-translational modification N6-acetyllysine; by autocatalysis. Residues 419 to 421 and 426 to 432 each bind acetyl-CoA; these read ILT and QRKGYGQ. Glu452 (proton donor/acceptor) is an active-site residue. Ser456 serves as a coordination point for acetyl-CoA. 2 disordered regions span residues 614–639 and 719–813; these read ENYN…KTSK and PLGN…SHIR. Positions 621–633 are enriched in basic residues; the sequence is AHNKRRRRRRRSS. Acidic residues-rich tracts occupy residues 736-746 and 755-794; these read EQDEVENDVDT and KEDE…DDDE. Positions 795–812 are enriched in basic and acidic residues; the sequence is DGKRKGQEQDENDIESHI.

It belongs to the MYST (SAS/MOZ) family. In terms of assembly, component of the NuA3 histone acetyltransferase (HAT) complex. The NuA3 HAT complex has 2 functionally distinct forms that participate in transcription. The NuA3a HAT complex is composed of at least NTO1, SAS3, TAF14, YNG1 and EAF6. The NuA3b HAT complex contains an additional subunit, PDP3. SAS3 interacts with CDC68/SPT16. Post-translationally, autoacetylation at Lys-367 is required for proper function.

The protein localises to the nucleus. It carries out the reaction L-lysyl-[protein] + acetyl-CoA = N(6)-acetyl-L-lysyl-[protein] + CoA + H(+). Its function is as follows. Catalytic component of the NuA3 histone acetyltransferase complex, that acetylates H3K14. The NuA3 HAT complex has 2 functionally distinct forms. NuA3a binds H3K4me3, through the PHD finger of YNG1, and acetylates H3K14 at the promoter region of actively transcribed genes to promote transcription initiation. NuA3b binds H3K36me3 at the coding regions of actively transcribed genes, through the PWWP domain of PDP3, and coordinates transcription elongation. In vitro, SAS3 acetylates free histones H3 and H4. It is involved in silencing the HMR locus. The protein is Histone acetyltransferase SAS3 of Saccharomyces cerevisiae (strain ATCC 204508 / S288c) (Baker's yeast).